Reading from the N-terminus, the 41-residue chain is Large ribosomal subunit protein bL36 (41 aa).

This sequence belongs to the bacterial ribosomal protein bL36 family.

In Ruegeria pomeroyi (strain ATCC 700808 / DSM 15171 / DSS-3) (Silicibacter pomeroyi), this protein is Large ribosomal subunit protein bL36.